The following is a 301-amino-acid chain: Probable alpha-L-glutamate ligase (301 aa).

The ATP-grasp domain occupies 104–287; that stretch reads LQLLSRRGVG…IASQIIAFIE (184 aa). ATP contacts are provided by residues lysine 141, 178–179, aspartate 187, and 211–213; these read EF and RSN. The Mg(2+) site is built by aspartate 248, glutamate 260, and asparagine 262. Residues aspartate 248, glutamate 260, and asparagine 262 each contribute to the Mn(2+) site.

This sequence belongs to the RimK family. Mg(2+) is required as a cofactor. Mn(2+) serves as cofactor.

The sequence is that of Probable alpha-L-glutamate ligase from Hydrogenovibrio crunogenus (strain DSM 25203 / XCL-2) (Thiomicrospira crunogena).